Reading from the N-terminus, the 533-residue chain is GMP synthase [glutamine-hydrolyzing] (533 aa).

The 191-residue stretch at 25 to 215 (SIVIFDFGSQ…VFNICKCHAN (191 aa)) folds into the Glutamine amidotransferase type-1 domain. Cys102 functions as the Nucleophile in the catalytic mechanism. Active-site residues include His189 and Glu191. Residues 216 to 408 (WTMGNYIQES…LGLPDEMIWR (193 aa)) form the GMPS ATP-PPase domain. Residue 243 to 249 (SGGVDSA) participates in ATP binding.

In terms of assembly, homodimer.

The catalysed reaction is XMP + L-glutamine + ATP + H2O = GMP + L-glutamate + AMP + diphosphate + 2 H(+). It functions in the pathway purine metabolism; GMP biosynthesis; GMP from XMP (L-Gln route): step 1/1. In terms of biological role, catalyzes the synthesis of GMP from XMP. In Dehalococcoides mccartyi (strain ATCC BAA-2266 / KCTC 15142 / 195) (Dehalococcoides ethenogenes (strain 195)), this protein is GMP synthase [glutamine-hydrolyzing].